A 165-amino-acid chain; its full sequence is Secreted acidic protein 2 (165 aa).

Composition is skewed to acidic residues over residues 1-58 (WSXS…DDSG) and 80-102 (ESSDDDNERDDTSDDSVGDDAYN). The tract at residues 1-112 (WSXSGDDDDD…DDSQAGELNS (112 aa)) is disordered. The span at 103–112 (DDSQAGELNS) shows a compositional bias: polar residues.

In terms of tissue distribution, component of the acid-insoluble and acid-soluble organic matrix of the aragonitic skeleton (at protein level).

Its subcellular location is the secreted. The chain is Secreted acidic protein 2 from Acropora millepora (Staghorn coral).